Consider the following 536-residue polypeptide: T-complex protein 1 subunit delta (536 aa).

Polar residues predominate over residues 1–15; it reads MPEGKATSSASNTGK. The disordered stretch occupies residues 1–26; the sequence is MPEGKATSSASNTGKNKGGAYQDRDK. Gly50 provides a ligand contact to ADP. Gly50 serves as a coordination point for ATP. Asp101 contributes to the Mg(2+) binding site. Positions 102, 103, 104, 105, 170, 171, 422, and 507 each coordinate ADP. The ATP site is built by Gly102 and Thr103. Lys171 is a binding site for ATP.

Belongs to the TCP-1 chaperonin family. As to quaternary structure, component of the chaperonin-containing T-complex (TRiC), a hexadecamer composed of two identical back-to-back stacked rings enclosing a protein folding chamber. Each ring is made up of eight different subunits: TCP1/CCT1, CCT2, CCT3, CCT4, CCT5, CCT6A/CCT6, CCT7, CCT8.

The protein resides in the cytoplasm. The catalysed reaction is ATP + H2O = ADP + phosphate + H(+). Its function is as follows. Component of the chaperonin-containing T-complex (TRiC), a molecular chaperone complex that assists the folding of actin, tubulin and other proteins upon ATP hydrolysis. This Takifugu rubripes (Japanese pufferfish) protein is T-complex protein 1 subunit delta (cct4).